The following is a 127-amino-acid chain: Ribonuclease P protein component 1 (127 aa).

The protein belongs to the eukaryotic/archaeal RNase P protein component 1 family. In terms of assembly, consists of a catalytic RNA component and at least 5 protein subunits. Forms a heterodimeric subcomplex with Rnp4. Reconstituted enzyme missing individual protein subunits is suboptimally active, showing each subunit contributes to optimization of activity.

It localises to the cytoplasm. It catalyses the reaction Endonucleolytic cleavage of RNA, removing 5'-extranucleotides from tRNA precursor.. Part of ribonuclease P (RNase P), a protein complex that generates mature tRNA molecules by cleaving their 5'-ends. Binds RNase P RNA. The sequence is that of Ribonuclease P protein component 1 from Pyrococcus horikoshii (strain ATCC 700860 / DSM 12428 / JCM 9974 / NBRC 100139 / OT-3).